The primary structure comprises 1126 residues: Formin-B (1126 aa).

Positions 1–21 (MFFKGKKKDKEKEKSHGNIGN) are disordered. In terms of domain architecture, GBD/FH3 spans 38-406 (EQNLSNEDLK…LILKDPSKES (369 aa)). Residues 427-447 (LNNSNNNNNNNNSNNNNNDSN) are compositionally biased toward low complexity. Residues 427-462 (LNNSNNNNNNNNSNNNNNDSNVSTPNINTGSPLLPP) are disordered. Residues 448–462 (VSTPNINTGSPLLPP) show a composition bias toward polar residues. A coiled-coil region spans residues 463–514 (QQYQDLEQKLQLTQNEKNESQNKVKQLESEIKGLNSTLTGLQLKVTKLEADL). A compositionally biased stretch (polar residues) spans 518 to 532 (SVTTPPSDTNGTTSP). Disordered regions lie at residues 518–619 (SVTT…SVPS) and 1004–1078 (ARKK…QNGT). One can recognise an FH1 domain in the interval 527-611 (NGTTSPPIEA…PGAPAVPNLP (85 aa)). Pro residues predominate over residues 543–597 (GAPPPPPPPPPAPPVSGGGPPPPPPPPPPSSGGGPPPPPPPPSSGGPPPPPPPPG). 3 stretches are compositionally biased toward low complexity: residues 598–607 (GMKKPGAPAV), 1009–1022 (AASG…SGSS), and 1032–1064 (SPIT…QQQQ). The FH2 domain occupies 612–1011 (PKKSSVPSVK…LAARKKAAAS (400 aa)). A coiled-coil region spans residues 980 to 1010 (KFKNEFKRTIESIQKERENVQKLAARKKAAA). The region spanning 1071 to 1100 (DDIPQNGTFMDQLMSKMKGGEAIRASRRAS) is the DAD domain.

The protein belongs to the formin homology family. Diaphanous subfamily. As to quaternary structure, interacts (via GBD/FH3 domain) with activated Rho-GTPases. Interacts with pfyA and pfyB.

Its function is as follows. Formins play an important role in the nucleation of actin and the formation of linear actin filaments. This chain is Formin-B (forB), found in Dictyostelium discoideum (Social amoeba).